The following is a 515-amino-acid chain: N-fatty-acyl-amino acid synthase/hydrolase PM20D1.1 (515 aa).

Residues 1–34 (MKTKFTKKTVLKFFGILFAILLLSVLILFSVVIG) form the signal peptide. N-linked (GlcNAc...) asparagine glycans are attached at residues Asn50, Asn87, and Asn118. His140 provides a ligand contact to Zn(2+). Residue Asp142 is part of the active site. Asp173 is a binding site for Zn(2+). Glu207 (proton acceptor) is an active-site residue. Glu208, Asp234, and His480 together coordinate Zn(2+).

This sequence belongs to the peptidase M20A family. Requires Zn(2+) as cofactor.

The protein resides in the secreted. It catalyses the reaction an N-acyl-L-amino acid + H2O = an L-alpha-amino acid + a carboxylate. It carries out the reaction an N-acyl-aromatic L-alpha-amino acid + H2O = an aromatic L-alpha-amino acid + a carboxylate. The enzyme catalyses N-(5Z,8Z,11Z,14Z)-eicosatetraenoyl-glycine + H2O = (5Z,8Z,11Z,14Z)-eicosatetraenoate + glycine. The catalysed reaction is N-hexadecanoyl-L-phenylalanine + H2O = hexadecanoate + L-phenylalanine. It catalyses the reaction N-octadecanoyl-L-phenylalanine + H2O = octadecanoate + L-phenylalanine. It carries out the reaction N-(4Z,7Z,10Z,13Z,16Z,19Z-docosahexaenoyl)-L-phenylalanine + H2O = (4Z,7Z,10Z,13Z,16Z,19Z)-docosahexaenoate + L-phenylalanine. The enzyme catalyses N-(9Z-octadecenoyl)-L-asparagine + H2O = L-asparagine + (9Z)-octadecenoate. The catalysed reaction is (9Z)-octadecenoate + glycine = N-(9Z-octadecenoyl)glycine + H2O. It catalyses the reaction N-(9Z-octadecenoyl)-L-lysine + H2O = L-lysine + (9Z)-octadecenoate. It carries out the reaction N-(9Z-octadecenoyl)-L-methionine + H2O = (9Z)-octadecenoate + L-methionine. The enzyme catalyses N-(9Z-octadecenoyl)-L-serine + H2O = L-serine + (9Z)-octadecenoate. The catalysed reaction is N-(9Z-octadecenoyl)-L-tryptophan + H2O = L-tryptophan + (9Z)-octadecenoate. It catalyses the reaction N-(9Z-octadecenoyl)-L-tyrosine + H2O = L-tyrosine + (9Z)-octadecenoate. It carries out the reaction N-(9Z-octadecenoyl)-L-glutamine + H2O = L-glutamine + (9Z)-octadecenoate. The enzyme catalyses N-(5Z,8Z,11Z,14Z-eicosatetraenoyl)-L-serine + H2O = (5Z,8Z,11Z,14Z)-eicosatetraenoate + L-serine. The catalysed reaction is (5Z,8Z,11Z,14Z)-eicosatetraenoate + L-phenylalanine = N-(5Z,8Z,11Z,14Z-eicosatetraenoyl)-L-phenylalanine + H2O. It catalyses the reaction N-(9Z-octadecenoyl)-L-leucine + H2O = L-leucine + (9Z)-octadecenoate. It carries out the reaction L-phenylalanine + (9Z)-octadecenoate = N-(9Z-octadecenoyl)-L-phenylalanine + H2O. Its pathway is amino-acid metabolism. The protein operates within energy metabolism; electron transfer. It functions in the pathway lipid metabolism; fatty acid metabolism. Lipoproteins are powerful coactivators of PM20D1 activity in vitro and NAA biosynthesis in vivo. In terms of biological role, secreted enzyme that regulates the endogenous N-fatty acyl amino acid (NAAs) tissue and circulating levels by functioning as a bidirectional NAA synthase/hydrolase. It condenses free fatty acids and free amino acids to generate NAAs and bidirectionally catalyzes the reverse hydrolysis reaction. Some of these NAAs stimulate oxidative metabolism via mitochondrial uncoupling, increasing energy expenditure in a UPC1-independent manner. Thereby, this secreted protein may indirectly regulate whole body energy expenditure. PM20D1 circulates in tight association with both low- and high-density (LDL and HDL,respectively) lipoprotein particles. This Danio rerio (Zebrafish) protein is N-fatty-acyl-amino acid synthase/hydrolase PM20D1.1.